The sequence spans 610 residues: Menin (610 aa).

Residues Gly214–Pro390 form an interaction with FANCD2 region. Positions Arg460 to Thr552 are disordered. Residues Arg484–Leu500 show a composition bias toward basic and acidic residues. Phosphoserine is present on residues Ser487 and Ser543. Thr594 carries the phosphothreonine modification.

As to quaternary structure, component of the MLL-HCF complex, at least composed of KMT2A/MLL1, MEN1, ASH2L, RBBP5, DPY30, WDR5, HCFC1 and HCFC2. Component of the menin-associated histone methyltransferase complex, at least composed of KMT2B/MLL4, MEN1, ASH2L, RBBP5, DPY30 and WDR5. Interacts with POLR2B. Interacts with POLR2A phosphorylated at 'Ser-5', but not with the unphosphorylated, nor 'Ser-2' phosphorylated POLR2A forms. Interacts with FANCD2 and DBF4. Interacts with JUND (via MBM motif); inhibits the interaction of JUND with MAPK10 and the phosphorylation of JUND by MAP kinases MAPK8 and MAPK10. Interacts with SMAD3, but not with SMAD2, nor SMAD4. Directly interacts with NFKB1, NFKB2 and RELA. Interacts with KMT2A (via MBM motif). The KMT2A-MEN1 complex interacts with PSIP1 with a greater affinity as MEN1 enhances interaction of KMT2A with PSIP1. Interacts with the fusion protein KMT2A-MLLT3. Ubiquitous.

The protein localises to the nucleus. Its function is as follows. Essential component of a MLL/SET1 histone methyltransferase (HMT) complex, a complex that specifically methylates 'Lys-4' of histone H3 (H3K4). Functions as a transcriptional regulator. Binds to the TERT promoter and represses telomerase expression. Plays a role in TGFB1-mediated inhibition of cell-proliferation, possibly regulating SMAD3 transcriptional activity. Represses JUND-mediated transcriptional activation on AP1 sites, as well as that mediated by NFKB subunit RELA. Positively regulates HOXC8 and HOXC6 gene expression. May be involved in normal hematopoiesis through the activation of HOXA9 expression. May be involved in DNA repair. The protein is Menin (MEN1) of Homo sapiens (Human).